The sequence spans 326 residues: Aquaporin-4 (326 aa).

The Cytoplasmic portion of the chain corresponds to Met1–Lys39. Residues Cys15 and Cys20 are each lipidated (S-palmitoyl cysteine). The helical transmembrane segment at Ala40–Ile60 threads the bilayer. Topologically, residues Asn61–Asp72 are extracellular. The chain crosses the membrane as a helical span at residues Met73–Gly92. Residues His93 to Gly96 lie on the Cytoplasmic side of the membrane. The discontinuously helical intramembrane region spans Gly97 to Thr104. Positions Asn100–Ala102 match the NPA 1 motif. The Cytoplasmic portion of the chain corresponds to Val105–Ser118. Residue Ser114 is modified to Phosphoserine; by PKG. The chain crosses the membrane as a helical span at residues Val119–Val139. Residues Thr140–Thr158 lie on the Extracellular side of the membrane. A glycan (N-linked (GlcNAc...) asparagine) is linked at Asn156. A helical membrane pass occupies residues Ala159 to Ala179. The Cytoplasmic segment spans residues Ser180–Asp187. Residue Ser183 is modified to Phosphoserine; by PKC. Residues Val188 to Ile208 traverse the membrane as a helical segment. Asn209 carries an N-linked (GlcNAc...) asparagine glycan. At Asn209–Thr211 the chain is on the extracellular side. An intramembrane region (discontinuously helical) is located at residues Gly212–Val225. The short motif at Asn216–Ala218 is the NPA 2 element. The Extracellular segment spans residues Ile226 to Trp234. The helical transmembrane segment at Ile235 to Phe255 threads the bilayer. At Cys256–Val326 the chain is on the cytoplasmic side. 2 positions are modified to phosphoserine: Ser279 and Ser288. Phosphothreonine is present on Thr292. At Ser324 the chain carries Phosphoserine.

It belongs to the MIP/aquaporin (TC 1.A.8) family. In terms of assembly, homotetramer. The tetramers can form oligomeric arrays in membranes. The size of the oligomers differs between tissues and is smaller in skeletal muscle than in brain. Interaction between AQP4 oligomeric arrays in close-by cells can contribute to cell-cell adhesion. Part of a complex containing MLC1, TRPV4, HEPACAM and ATP1B1. Phosphorylation by PKC at Ser-183 reduces conductance by 50%. Phosphorylation by PKG at Ser-114 in response to glutamate increases conductance by 40%. Post-translationally, isoform Long: Palmitoylated on its N-terminal region.

It localises to the cell membrane. Its subcellular location is the basolateral cell membrane. The protein localises to the endosome membrane. The protein resides in the sarcolemma. It is found in the cell projection. The catalysed reaction is H2O(in) = H2O(out). Forms a water-specific channel. Plays an important role in brain water homeostasis and in glymphatic solute transport. Required for a normal rate of water exchange across the blood brain interface. Required for normal levels of cerebrospinal fluid influx into the brain cortex and parenchyma along paravascular spaces that surround penetrating arteries, and for normal drainage of interstitial fluid along paravenous drainage pathways. Thereby, it is required for normal clearance of solutes from the brain interstitial fluid, including soluble beta-amyloid peptides derived from APP. Plays a redundant role in urinary water homeostasis and urinary concentrating ability. In Notomys alexis (Spinifex hopping mouse), this protein is Aquaporin-4 (AQP4).